The primary structure comprises 114 residues: QVMPFMEVYERSVCQTREMLVSILDEYPSEVAHLFRPSCVTVLRCGGCCTEESLTCTATGKRSVGREIMRVDPRQGTSKIEVMQFTEHTECECRPGSTVNNGKRKKNPKEGEPR.

Glutamine 1 carries the pyrrolidone carboxylic acid modification. Intrachain disulfides connect cysteine 14–cysteine 56, cysteine 45–cysteine 91, and cysteine 49–cysteine 93. The tract at residues 92–114 is disordered; the sequence is ECRPGSTVNNGKRKKNPKEGEPR.

The protein belongs to the PDGF/VEGF growth factor family. Snake venom VEGF subfamily. In terms of assembly, homodimer; disulfide-linked. Interacts with human VEGF receptor 1/FLT1. Interacts with human VEGF receptor 2/KDR. As to expression, expressed by venom gland.

The protein localises to the secreted. In terms of biological role, snake venom vascular endothelial growth factor (svVEGF) that may contribute to venom dispersion and prey subjugation by inducing vascular permeability and hypotension. Induces an increase in capillary permeability after intradermal injection, as well as a drastic hypotensive effect after intravenous injection. The hypotension is mediated by nitric oxide (NO), which is produced by VEGF-activated endothelium NO synthase. Induces angiogenesis and migration of human vascular endothelial cells in vitro. Exhibits angiogenic activity by inducing human umbilical vein endothelial cells (HUVEC) to develop vessels in vitro. Induces cellular migration of HUVEC cells towards a wound in scratch assays, enhancing wound closure after 12 h by 49.5%. Induces dose-dependent leukocyte recruitment to the peritoneal cavity leading to increased vascular permeability in mice. The polypeptide is Snake venom vascular endothelial growth factor (Crotalus durissus terrificus (South American rattlesnake)).